Here is a 179-residue protein sequence, read N- to C-terminus: Large ribosomal subunit protein uL5 (179 aa).

This sequence belongs to the universal ribosomal protein uL5 family. In terms of assembly, part of the 50S ribosomal subunit; part of the 5S rRNA/L5/L18/L25 subcomplex. Contacts the 5S rRNA and the P site tRNA. Forms a bridge to the 30S subunit in the 70S ribosome.

In terms of biological role, this is one of the proteins that bind and probably mediate the attachment of the 5S RNA into the large ribosomal subunit, where it forms part of the central protuberance. In the 70S ribosome it contacts protein S13 of the 30S subunit (bridge B1b), connecting the 2 subunits; this bridge is implicated in subunit movement. Contacts the P site tRNA; the 5S rRNA and some of its associated proteins might help stabilize positioning of ribosome-bound tRNAs. The protein is Large ribosomal subunit protein uL5 of Haemophilus ducreyi (strain 35000HP / ATCC 700724).